Consider the following 568-residue polypeptide: Proline--tRNA ligase (568 aa).

Belongs to the class-II aminoacyl-tRNA synthetase family. ProS type 1 subfamily. As to quaternary structure, homodimer.

The protein resides in the cytoplasm. The enzyme catalyses tRNA(Pro) + L-proline + ATP = L-prolyl-tRNA(Pro) + AMP + diphosphate. Its function is as follows. Catalyzes the attachment of proline to tRNA(Pro) in a two-step reaction: proline is first activated by ATP to form Pro-AMP and then transferred to the acceptor end of tRNA(Pro). As ProRS can inadvertently accommodate and process non-cognate amino acids such as alanine and cysteine, to avoid such errors it has two additional distinct editing activities against alanine. One activity is designated as 'pretransfer' editing and involves the tRNA(Pro)-independent hydrolysis of activated Ala-AMP. The other activity is designated 'posttransfer' editing and involves deacylation of mischarged Ala-tRNA(Pro). The misacylated Cys-tRNA(Pro) is not edited by ProRS. This Halorhodospira halophila (strain DSM 244 / SL1) (Ectothiorhodospira halophila (strain DSM 244 / SL1)) protein is Proline--tRNA ligase.